Reading from the N-terminus, the 419-residue chain is L-rhamnose isomerase (419 aa).

Residues H262, D294, and D296 each coordinate Mn(2+).

It belongs to the rhamnose isomerase family. Homotetramer. It depends on Mn(2+) as a cofactor.

The protein localises to the cytoplasm. The catalysed reaction is L-rhamnopyranose = L-rhamnulose. It participates in carbohydrate degradation; L-rhamnose degradation; glycerone phosphate from L-rhamnose: step 1/3. Catalyzes the interconversion of L-rhamnose and L-rhamnulose. The polypeptide is L-rhamnose isomerase (Escherichia coli O127:H6 (strain E2348/69 / EPEC)).